A 396-amino-acid polypeptide reads, in one-letter code: 2-methyl-aconitate isomerase (396 aa).

Residues Ser19 and 66–70 (SSTSK) each bind substrate. Cys104 (proton donor/acceptor) is an active-site residue. Cys104 carries the post-translational modification Cysteine sulfinic acid (-SO2H). Positions 106, 278, 309, and 314 each coordinate substrate. The active-site Proton donor/acceptor is the Met318. Gly319 serves as a coordination point for substrate.

Belongs to the PrpF family. As to quaternary structure, homodimer.

The enzyme catalyses 2-methyl-trans-aconitate = 2-methyl-cis-aconitate. Its pathway is organic acid metabolism; propanoate degradation. Catalyzes the isomerization of 2-methyl-trans-aconitate to yield 2-methyl-cis-aconitate through a base-catalyzed proton abstraction coupled with a rotation about C2-C3 bond of 2-methyl-aconitate. This chain is 2-methyl-aconitate isomerase, found in Cupriavidus necator (Alcaligenes eutrophus).